The following is an 80-amino-acid chain: MMKLMLFSIIVILFSLIGSIHGADVPGNYPLDSSDDTYLCAPLGENPFCIKICRKHGVKYGYCYAFQCWCEYLEDKNVKI.

The N-terminal stretch at 1–22 (MMKLMLFSIIVILFSLIGSIHG) is a signal peptide. Residues 25-80 (VPGNYPLDSSDDTYLCAPLGENPFCIKICRKHGVKYGYCYAFQCWCEYLEDKNVKI) form the LCN-type CS-alpha/beta domain. Cystine bridges form between cysteine 40-cysteine 63, cysteine 49-cysteine 68, and cysteine 53-cysteine 70.

The protein belongs to the long (3 C-C) scorpion toxin superfamily. Sodium/Potassium channel inhibitor family. Expressed by the venom gland.

It localises to the secreted. In terms of biological role, inhibits the vertebrate potassium channels Kv1.1/KCNA1 and Kv1.3/KCNA3 in vitro with an IC(50) of 5.3 nM and 50.0 nM respectively. The sequence is that of Beta-toxin KAaH1 from Androctonus australis (Sahara scorpion).